The following is a 424-amino-acid chain: Enolase (424 aa).

Q162 provides a ligand contact to (2R)-2-phosphoglycerate. The active-site Proton donor is the E204. D241, E284, and D311 together coordinate Mg(2+). Residues K336, R365, S366, and K387 each coordinate (2R)-2-phosphoglycerate. K336 acts as the Proton acceptor in catalysis.

This sequence belongs to the enolase family. Requires Mg(2+) as cofactor.

Its subcellular location is the cytoplasm. It localises to the secreted. The protein resides in the cell surface. It catalyses the reaction (2R)-2-phosphoglycerate = phosphoenolpyruvate + H2O. It participates in carbohydrate degradation; glycolysis; pyruvate from D-glyceraldehyde 3-phosphate: step 4/5. In terms of biological role, catalyzes the reversible conversion of 2-phosphoglycerate (2-PG) into phosphoenolpyruvate (PEP). It is essential for the degradation of carbohydrates via glycolysis. The polypeptide is Enolase (Agrobacterium fabrum (strain C58 / ATCC 33970) (Agrobacterium tumefaciens (strain C58))).